Reading from the N-terminus, the 473-residue chain is Aspartyl/glutamyl-tRNA(Asn/Gln) amidotransferase subunit B (473 aa).

Belongs to the GatB/GatE family. GatB subfamily. As to quaternary structure, heterotrimer of A, B and C subunits.

The catalysed reaction is L-glutamyl-tRNA(Gln) + L-glutamine + ATP + H2O = L-glutaminyl-tRNA(Gln) + L-glutamate + ADP + phosphate + H(+). The enzyme catalyses L-aspartyl-tRNA(Asn) + L-glutamine + ATP + H2O = L-asparaginyl-tRNA(Asn) + L-glutamate + ADP + phosphate + 2 H(+). Allows the formation of correctly charged Asn-tRNA(Asn) or Gln-tRNA(Gln) through the transamidation of misacylated Asp-tRNA(Asn) or Glu-tRNA(Gln) in organisms which lack either or both of asparaginyl-tRNA or glutaminyl-tRNA synthetases. The reaction takes place in the presence of glutamine and ATP through an activated phospho-Asp-tRNA(Asn) or phospho-Glu-tRNA(Gln). This Campylobacter hominis (strain ATCC BAA-381 / DSM 21671 / CCUG 45161 / LMG 19568 / NCTC 13146 / CH001A) protein is Aspartyl/glutamyl-tRNA(Asn/Gln) amidotransferase subunit B.